Reading from the N-terminus, the 454-residue chain is Putative flavin-containing monoamine oxidase AofH (454 aa).

It belongs to the flavin monoamine oxidase family. It depends on FAD as a cofactor.

In Mycobacterium tuberculosis (strain CDC 1551 / Oshkosh), this protein is Putative flavin-containing monoamine oxidase AofH (aofH).